Reading from the N-terminus, the 308-residue chain is Ribosomal RNA small subunit methyltransferase H (308 aa).

Residues 34–36 (GGH), Asp54, Phe80, Asp101, and Gln108 each bind S-adenosyl-L-methionine.

Belongs to the methyltransferase superfamily. RsmH family.

It is found in the cytoplasm. It catalyses the reaction cytidine(1402) in 16S rRNA + S-adenosyl-L-methionine = N(4)-methylcytidine(1402) in 16S rRNA + S-adenosyl-L-homocysteine + H(+). Functionally, specifically methylates the N4 position of cytidine in position 1402 (C1402) of 16S rRNA. The protein is Ribosomal RNA small subunit methyltransferase H of Ureaplasma urealyticum serovar 10 (strain ATCC 33699 / Western).